Reading from the N-terminus, the 170-residue chain is Small ribosomal subunit protein uS5 (170 aa).

An S5 DRBM domain is found at 12–75 (LSELLVSVRR…NAAKKSMIRV (64 aa)).

The protein belongs to the universal ribosomal protein uS5 family. Part of the 30S ribosomal subunit. Contacts proteins S4 and S8.

In terms of biological role, with S4 and S12 plays an important role in translational accuracy. Functionally, located at the back of the 30S subunit body where it stabilizes the conformation of the head with respect to the body. This is Small ribosomal subunit protein uS5 from Wolbachia pipientis wMel.